Reading from the N-terminus, the 174-residue chain is MTYALFLLSVSLVMGFVGFSSKPSPIYGGLVLIVSGVVGCAIILNYGGGYMGLMVFLIYLGGMMVVFGYTTAMAIEEYPEAWGSGVEVLVSVLVGLAMEVGLVLWVKGYDGMVVVVNFNSVGSWMIYEGEGPGLIREDPIGAGALYDYGRWLVVVTGWTLFVGVYIVIEIARGN.

Transmembrane regions (helical) follow at residues Met-1–Ser-21, Ser-24–Leu-44, Gly-47–Phe-67, Val-86–Val-106, Gly-111–Gly-131, and Trp-151–Ala-171.

It belongs to the complex I subunit 6 family. As to quaternary structure, core subunit of respiratory chain NADH dehydrogenase (Complex I) which is composed of 45 different subunits.

It localises to the mitochondrion inner membrane. It carries out the reaction a ubiquinone + NADH + 5 H(+)(in) = a ubiquinol + NAD(+) + 4 H(+)(out). Functionally, core subunit of the mitochondrial membrane respiratory chain NADH dehydrogenase (Complex I) which catalyzes electron transfer from NADH through the respiratory chain, using ubiquinone as an electron acceptor. Essential for the catalytic activity and assembly of complex I. This chain is NADH-ubiquinone oxidoreductase chain 6 (MT-ND6), found in Pan troglodytes (Chimpanzee).